Reading from the N-terminus, the 660-residue chain is Bifunctional polymyxin resistance protein ArnA (660 aa).

Positions methionine 1 to leucine 304 are formyltransferase ArnAFT. Residue histidine 104 is the Proton donor; for formyltransferase activity of the active site. (6R)-10-formyltetrahydrofolate is bound by residues arginine 114 and valine 136 to aspartate 140. A dehydrogenase ArnADH region spans residues arginine 314–serine 660. NAD(+)-binding positions include aspartate 347 and aspartate 368–isoleucine 369. UDP-alpha-D-glucuronate-binding positions include alanine 393, tyrosine 398, and threonine 432–serine 433. The Proton acceptor; for decarboxylase activity role is filled by glutamate 434. UDP-alpha-D-glucuronate-binding positions include arginine 460, asparagine 492, lysine 526–arginine 535, and tyrosine 613. Arginine 619 acts as the Proton donor; for decarboxylase activity in catalysis.

The protein in the N-terminal section; belongs to the Fmt family. UDP-L-Ara4N formyltransferase subfamily. In the C-terminal section; belongs to the NAD(P)-dependent epimerase/dehydratase family. UDP-glucuronic acid decarboxylase subfamily. In terms of assembly, homohexamer, formed by a dimer of trimers.

The enzyme catalyses UDP-alpha-D-glucuronate + NAD(+) = UDP-beta-L-threo-pentopyranos-4-ulose + CO2 + NADH. It catalyses the reaction UDP-4-amino-4-deoxy-beta-L-arabinose + (6R)-10-formyltetrahydrofolate = UDP-4-deoxy-4-formamido-beta-L-arabinose + (6S)-5,6,7,8-tetrahydrofolate + H(+). It functions in the pathway nucleotide-sugar biosynthesis; UDP-4-deoxy-4-formamido-beta-L-arabinose biosynthesis; UDP-4-deoxy-4-formamido-beta-L-arabinose from UDP-alpha-D-glucuronate: step 1/3. The protein operates within nucleotide-sugar biosynthesis; UDP-4-deoxy-4-formamido-beta-L-arabinose biosynthesis; UDP-4-deoxy-4-formamido-beta-L-arabinose from UDP-alpha-D-glucuronate: step 3/3. Its pathway is bacterial outer membrane biogenesis; lipopolysaccharide biosynthesis. Functionally, bifunctional enzyme that catalyzes the oxidative decarboxylation of UDP-glucuronic acid (UDP-GlcUA) to UDP-4-keto-arabinose (UDP-Ara4O) and the addition of a formyl group to UDP-4-amino-4-deoxy-L-arabinose (UDP-L-Ara4N) to form UDP-L-4-formamido-arabinose (UDP-L-Ara4FN). The modified arabinose is attached to lipid A and is required for resistance to polymyxin and cationic antimicrobial peptides. In Salmonella dublin (strain CT_02021853), this protein is Bifunctional polymyxin resistance protein ArnA.